The sequence spans 154 residues: UPF0127 protein TSIB_1463 (154 aa).

This sequence belongs to the UPF0127 family.

The chain is UPF0127 protein TSIB_1463 from Thermococcus sibiricus (strain DSM 12597 / MM 739).